A 294-amino-acid chain; its full sequence is 4-diphosphocytidyl-2-C-methyl-D-erythritol kinase (294 aa).

Residue lysine 11 is part of the active site. Residue 93-103 (PFGAGLGGGSS) participates in ATP binding. Residue aspartate 135 is part of the active site.

The protein belongs to the GHMP kinase family. IspE subfamily.

It carries out the reaction 4-CDP-2-C-methyl-D-erythritol + ATP = 4-CDP-2-C-methyl-D-erythritol 2-phosphate + ADP + H(+). The protein operates within isoprenoid biosynthesis; isopentenyl diphosphate biosynthesis via DXP pathway; isopentenyl diphosphate from 1-deoxy-D-xylulose 5-phosphate: step 3/6. Functionally, catalyzes the phosphorylation of the position 2 hydroxy group of 4-diphosphocytidyl-2C-methyl-D-erythritol. This Chlorobium phaeobacteroides (strain DSM 266 / SMG 266 / 2430) protein is 4-diphosphocytidyl-2-C-methyl-D-erythritol kinase.